A 111-amino-acid polypeptide reads, in one-letter code: Phosphoribosyl-ATP pyrophosphatase (111 aa).

It belongs to the PRA-PH family.

The protein resides in the cytoplasm. The enzyme catalyses 1-(5-phospho-beta-D-ribosyl)-ATP + H2O = 1-(5-phospho-beta-D-ribosyl)-5'-AMP + diphosphate + H(+). Its pathway is amino-acid biosynthesis; L-histidine biosynthesis; L-histidine from 5-phospho-alpha-D-ribose 1-diphosphate: step 2/9. The protein is Phosphoribosyl-ATP pyrophosphatase of Pseudomonas paraeruginosa (strain DSM 24068 / PA7) (Pseudomonas aeruginosa (strain PA7)).